The primary structure comprises 480 residues: Membrane-bound lytic murein transglycosylase F (480 aa).

The first 15 residues, 1 to 15 (MKKLLFVLLTITLLA), serve as a signal peptide directing secretion. The interval 16–259 (SCQKVSVEQT…HLNEKYFAHV (244 aa)) is non-LT domain. The tract at residues 260 to 480 (KRFDYVDTRA…QENLSGAQPQ (221 aa)) is LT domain. Glutamate 304 is a catalytic residue.

In the N-terminal section; belongs to the bacterial solute-binding protein 3 family. It in the C-terminal section; belongs to the transglycosylase Slt family.

It localises to the cell outer membrane. It carries out the reaction Exolytic cleavage of the (1-&gt;4)-beta-glycosidic linkage between N-acetylmuramic acid (MurNAc) and N-acetylglucosamine (GlcNAc) residues in peptidoglycan, from either the reducing or the non-reducing ends of the peptidoglycan chains, with concomitant formation of a 1,6-anhydrobond in the MurNAc residue.. Functionally, murein-degrading enzyme that degrades murein glycan strands and insoluble, high-molecular weight murein sacculi, with the concomitant formation of a 1,6-anhydromuramoyl product. Lytic transglycosylases (LTs) play an integral role in the metabolism of the peptidoglycan (PG) sacculus. Their lytic action creates space within the PG sacculus to allow for its expansion as well as for the insertion of various structures such as secretion systems and flagella. The chain is Membrane-bound lytic murein transglycosylase F from Shewanella sediminis (strain HAW-EB3).